The sequence spans 929 residues: ATP-dependent RNA helicase DDX42 (929 aa).

Lys5 carries the post-translational modification N6-acetyllysine. Residue Arg12 is modified to Omega-N-methylarginine. 2 disordered regions span residues 25 to 119 and 182 to 203; these read KKEE…LEAF and EYDS…LPPI. The segment covering 35–52 has biased composition (low complexity); sequence SHSAFGAASSSSGFGKSA. At Ser58 the chain carries Phosphoserine. Residues 70–84 are compositionally biased toward acidic residues; sequence DEENAYFEDEEEDSS. Ser96, Ser104, Ser109, and Ser111 each carry phosphoserine. The stretch at 116–157 forms a coiled coil; that stretch reads LEAFMAEVEDQAARDMKRLEEKDKERKNVKGIRDDIEEEDDQ. Ser185 carries the phosphoserine modification. The Q motif signature appears at 253–281; that stretch reads SSFAHFGFDEQLMHQIRKSEYTQPTPIQC. Residues 284–459 form the Helicase ATP-binding domain; it reads VPVALSGRDM…RDILIDPIRV (176 aa). 297–304 is a binding site for ATP; that stretch reads AKTGSGKT. The short motif at 407-410 is the DEAD box element; sequence DEAD. A Helicase C-terminal domain is found at 487-632; the sequence is WLTRRLVEFT…HVSKELLDLA (146 aa). 2 disordered regions span residues 662 to 682 and 723 to 929; these read ERPG…VMSN and GTSS…RWDS. The segment covering 723–737 has biased composition (low complexity); that stretch reads GTSSAGASGWTSAGS. Composition is skewed to polar residues over residues 738-777 and 787-798; these read LNSV…SSAP and GVNNTASGNNSR. The necessary for interaction with TP53BP2 stretch occupies residues 739 to 828; the sequence is NSVPTNSAQQ…RHSHGDGGNR (90 aa). Basic and acidic residues predominate over residues 821–911; the sequence is SHGDGGNRHG…KVDSKTDKTP (91 aa). A Glycyl lysine isopeptide (Lys-Gly) (interchain with G-Cter in SUMO2) cross-link involves residue Lys894.

It belongs to the DEAD box helicase family. DDX42 subfamily. As to quaternary structure, transient component of the SF3B subcomplex of the 17S U2 SnRNP complex. Interacts (via the C-terminus) with TP53BP2; the interaction is not inhibitied by TP53BP2 ubiquitination and is independent of p53/TP53.

The protein localises to the cytoplasm. The protein resides in the nucleus. The enzyme catalyses ATP + H2O = ADP + phosphate + H(+). Functionally, ATP-dependent RNA helicase that binds to partially double-stranded RNAs (dsRNAs) in order to unwind RNA secondary structures. Unwinding is promoted in the presence of single-strand binding proteins. Also mediates RNA duplex formation thereby displacing the single-strand RNA binding protein. ATP and ADP modulate its activity: ATP binding and hydrolysis by DDX42 triggers RNA strand separation, whereas the ADP-bound form of the protein triggers annealing of complementary RNA strands. Required for assembly of the 17S U2 SnRNP complex of the spliceosome, a large ribonucleoprotein complex that removes introns from transcribed pre-mRNAs: DDX42 associates transiently with the SF3B subcomplex of the 17S U2 SnRNP complex and is released after fulfilling its role in the assembly of 17S U2 SnRNP. Involved in the survival of cells by interacting with TP53BP2 and thereby counteracting the apoptosis-stimulating activity of TP53BP2. Relocalizes TP53BP2 to the cytoplasm. The sequence is that of ATP-dependent RNA helicase DDX42 (Ddx42) from Mus musculus (Mouse).